Here is a 421-residue protein sequence, read N- to C-terminus: MDKYTELVINKIPELGFVNLLSHIYQTVGLCSSIDISKFKTNCNGYVVERFDKSETAGKVSCVPISILMELVERGMLSKPDNSKSQLEVKTDLVNELISKNNGFEDIMTIPTSIPMKYFFKPVLKEKVSKAIDFSVMDIKGDDVSRMGIRYGENDKVVKIKIAPERDAWMTNTSIHQFLIPMCYGTEVIYIGQFNFNFMNRHAIYEKSSVFNKNTEVFKLKDRIRDNRSSRFIMFGFCYLHHWKCAIYDKNRDFICFYDSGGNNPNEFNHYRNFFFYSNSDGLNRNSYLSSLANENADIDILFNFFIDNYGVTAGCINVEVNQLLESECGMFTCLFMAVCCLNPPKGFKGIRKIYTYFKFLADKKVTMLKSILFNVGKMEFTIKEVDGEGMQQYKKMEKWCANTINILANKITSRVEDIIN.

Residues H242, D249, and C329 contribute to the active site.

It belongs to the peptidase C57 family.

Its subcellular location is the virion. In terms of biological role, late protein responsible for processing most or all of the viral core and membrane proteins known to undergo morphogenesis-associated proteolysis. These proteolytic events are involved in the transformation of immature virions (IV) into mature virions (MV). The sequence is that of Core protease I7 homolog from Fowlpox virus (strain NVSL) (FPV).